Here is a 277-residue protein sequence, read N- to C-terminus: Large ribosomal subunit protein uL2c (277 aa).

2 disordered regions span residues 36–56 (NKHS…HRGG) and 225–259 (MNSV…GSKS).

This sequence belongs to the universal ribosomal protein uL2 family. In terms of assembly, part of the 50S ribosomal subunit.

Its subcellular location is the plastid. The protein resides in the chloroplast. This Psilotum nudum (Whisk fern) protein is Large ribosomal subunit protein uL2c (rpl2).